The following is a 230-amino-acid chain: Cytidylate kinase (230 aa).

Position 12 to 20 (12 to 20) interacts with ATP; it reads GPSGAGKGT.

It belongs to the cytidylate kinase family. Type 1 subfamily.

The protein resides in the cytoplasm. It catalyses the reaction CMP + ATP = CDP + ADP. The catalysed reaction is dCMP + ATP = dCDP + ADP. This chain is Cytidylate kinase, found in Yersinia pseudotuberculosis serotype O:1b (strain IP 31758).